The sequence spans 543 residues: CTP synthase (543 aa).

The interval 1 to 265 (MTRFIFVTGG…DQIVLDKFGL (265 aa)) is amidoligase domain. Serine 13 is a binding site for CTP. Residue serine 13 participates in UTP binding. ATP contacts are provided by residues 14 to 19 (SLGKGI) and aspartate 71. Mg(2+) contacts are provided by aspartate 71 and glutamate 139. Residues 146–148 (DIE), 186–191 (KTKPTQ), and lysine 222 contribute to the CTP site. Residues 186-191 (KTKPTQ) and lysine 222 each bind UTP. The 252-residue stretch at 290 to 541 (TIAMVGKYMD…IQAAVEQNER (252 aa)) folds into the Glutamine amidotransferase type-1 domain. Residue glycine 351 participates in L-glutamine binding. Cysteine 378 functions as the Nucleophile; for glutamine hydrolysis in the catalytic mechanism. Residues 379–382 (LGMQ), glutamate 402, and arginine 469 contribute to the L-glutamine site. Residues histidine 514 and glutamate 516 contribute to the active site.

This sequence belongs to the CTP synthase family. As to quaternary structure, homotetramer.

It catalyses the reaction UTP + L-glutamine + ATP + H2O = CTP + L-glutamate + ADP + phosphate + 2 H(+). It carries out the reaction L-glutamine + H2O = L-glutamate + NH4(+). The catalysed reaction is UTP + NH4(+) + ATP = CTP + ADP + phosphate + 2 H(+). It functions in the pathway pyrimidine metabolism; CTP biosynthesis via de novo pathway; CTP from UDP: step 2/2. Its activity is regulated as follows. Allosterically activated by GTP, when glutamine is the substrate; GTP has no effect on the reaction when ammonia is the substrate. The allosteric effector GTP functions by stabilizing the protein conformation that binds the tetrahedral intermediate(s) formed during glutamine hydrolysis. Inhibited by the product CTP, via allosteric rather than competitive inhibition. Its function is as follows. Catalyzes the ATP-dependent amination of UTP to CTP with either L-glutamine or ammonia as the source of nitrogen. Regulates intracellular CTP levels through interactions with the four ribonucleotide triphosphates. The sequence is that of CTP synthase from Saccharophagus degradans (strain 2-40 / ATCC 43961 / DSM 17024).